The sequence spans 816 residues: Subtilisin-like protease SBT2.6 (816 aa).

A signal peptide spans 1–19 (MDIGCKVLVFFTCFLTVTA). A propeptide spans 20–126 (EIYIVTMEGE…VDRDWKVRKL (107 aa)) (activation peptide). The region spanning 22–124 (YIVTMEGEPI…KSVDRDWKVR (103 aa)) is the Inhibitor I9 domain. The Peptidase S8 domain maps to 120 to 672 (DWKVRKLTTH…SGHVNPSAAL (553 aa)). Catalysis depends on charge relay system residues Asp-160 and His-235. Residues 418–492 (DCQKPEVLNK…SCIPGILITD (75 aa)) enclose the PA domain. 2 N-linked (GlcNAc...) asparagine glycosylation sites follow: Asn-504 and Asn-578. The active-site Charge relay system is Ser-597. A glycan (N-linked (GlcNAc...) asparagine) is linked at Asn-702.

It belongs to the peptidase S8 family.

It is found in the secreted. The sequence is that of Subtilisin-like protease SBT2.6 from Arabidopsis thaliana (Mouse-ear cress).